A 519-amino-acid chain; its full sequence is 2-isopropylmalate synthase (519 aa).

Residues 5–267 (VIIFDTTLRD…QTRINHKEIY (263 aa)) form the Pyruvate carboxyltransferase domain. Mn(2+) contacts are provided by D14, H202, H204, and N238. The tract at residues 392–519 (VMNYFNTQSG…RKHHTTQEAV (128 aa)) is regulatory domain.

The protein belongs to the alpha-IPM synthase/homocitrate synthase family. LeuA type 1 subfamily. Homodimer. Mn(2+) serves as cofactor.

The protein resides in the cytoplasm. It catalyses the reaction 3-methyl-2-oxobutanoate + acetyl-CoA + H2O = (2S)-2-isopropylmalate + CoA + H(+). The protein operates within amino-acid biosynthesis; L-leucine biosynthesis; L-leucine from 3-methyl-2-oxobutanoate: step 1/4. In terms of biological role, catalyzes the condensation of the acetyl group of acetyl-CoA with 3-methyl-2-oxobutanoate (2-ketoisovalerate) to form 3-carboxy-3-hydroxy-4-methylpentanoate (2-isopropylmalate). In Proteus mirabilis (strain HI4320), this protein is 2-isopropylmalate synthase.